The sequence spans 251 residues: tRNA pseudouridine synthase A (251 aa).

Residue Asp-52 is the Nucleophile of the active site. A substrate-binding site is contributed by Tyr-113.

The protein belongs to the tRNA pseudouridine synthase TruA family. In terms of assembly, homodimer.

The catalysed reaction is uridine(38/39/40) in tRNA = pseudouridine(38/39/40) in tRNA. Functionally, formation of pseudouridine at positions 38, 39 and 40 in the anticodon stem and loop of transfer RNAs. The sequence is that of tRNA pseudouridine synthase A from Brucella anthropi (strain ATCC 49188 / DSM 6882 / CCUG 24695 / JCM 21032 / LMG 3331 / NBRC 15819 / NCTC 12168 / Alc 37) (Ochrobactrum anthropi).